A 153-amino-acid polypeptide reads, in one-letter code: MEITSISSIGNLDMIELKPDQTVMACELEDAESFYRFWAGLAYDRIMIQVITTGSFIEDLSEYFEGHAYKVTKLAKREFHFQSILQEADRDIADFLFLLASINDDVFLITDPQPDKSYFSEGKLQCLTDSGERIIWFEYDAVDIYMIGGESYK.

This is an uncharacterized protein from Bacillus subtilis (strain 168).